A 196-amino-acid chain; its full sequence is GTP cyclohydrolase-2 (196 aa).

49-53 is a GTP binding site; it reads RVHSE. Zn(2+) contacts are provided by Cys54, Cys65, and Cys67. Residues Gln70, 92 to 94, and Thr114 contribute to the GTP site; that span reads EGR. Residue Asp126 is the Proton acceptor of the active site. Arg128 acts as the Nucleophile in catalysis. GTP-binding residues include Thr149 and Lys154.

The protein belongs to the GTP cyclohydrolase II family. As to quaternary structure, homodimer. It depends on Zn(2+) as a cofactor.

The enzyme catalyses GTP + 4 H2O = 2,5-diamino-6-hydroxy-4-(5-phosphoribosylamino)-pyrimidine + formate + 2 phosphate + 3 H(+). Its pathway is cofactor biosynthesis; riboflavin biosynthesis; 5-amino-6-(D-ribitylamino)uracil from GTP: step 1/4. In terms of biological role, catalyzes the conversion of GTP to 2,5-diamino-6-ribosylamino-4(3H)-pyrimidinone 5'-phosphate (DARP), formate and pyrophosphate. This chain is GTP cyclohydrolase-2, found in Enterobacter sp. (strain 638).